Here is a 701-residue protein sequence, read N- to C-terminus: Elongation factor G (701 aa).

The 283-residue stretch at 8 to 290 (ERYRNIGISA…AVVDYLPAPT (283 aa)) folds into the tr-type G domain. GTP is bound by residues 17-24 (AHIDAGKT), 88-92 (DTPGH), and 142-145 (NKMD).

It belongs to the TRAFAC class translation factor GTPase superfamily. Classic translation factor GTPase family. EF-G/EF-2 subfamily.

It is found in the cytoplasm. Its function is as follows. Catalyzes the GTP-dependent ribosomal translocation step during translation elongation. During this step, the ribosome changes from the pre-translocational (PRE) to the post-translocational (POST) state as the newly formed A-site-bound peptidyl-tRNA and P-site-bound deacylated tRNA move to the P and E sites, respectively. Catalyzes the coordinated movement of the two tRNA molecules, the mRNA and conformational changes in the ribosome. This Aeromonas hydrophila subsp. hydrophila (strain ATCC 7966 / DSM 30187 / BCRC 13018 / CCUG 14551 / JCM 1027 / KCTC 2358 / NCIMB 9240 / NCTC 8049) protein is Elongation factor G.